The sequence spans 328 residues: 4-hydroxy-3-methylbut-2-enyl diphosphate reductase (328 aa).

A [4Fe-4S] cluster-binding site is contributed by Cys24. Residues His55 and His88 each contribute to the (2E)-4-hydroxy-3-methylbut-2-enyl diphosphate site. Dimethylallyl diphosphate contacts are provided by His55 and His88. Residues His55 and His88 each coordinate isopentenyl diphosphate. Cys110 contacts [4Fe-4S] cluster. A (2E)-4-hydroxy-3-methylbut-2-enyl diphosphate-binding site is contributed by His138. His138 provides a ligand contact to dimethylallyl diphosphate. Isopentenyl diphosphate is bound at residue His138. Glu140 acts as the Proton donor in catalysis. Thr178 contacts (2E)-4-hydroxy-3-methylbut-2-enyl diphosphate. [4Fe-4S] cluster is bound at residue Cys208. Residues Ser236, Ser237, Asn238, and Ser279 each contribute to the (2E)-4-hydroxy-3-methylbut-2-enyl diphosphate site. Residues Ser236, Ser237, Asn238, and Ser279 each coordinate dimethylallyl diphosphate. Ser236, Ser237, Asn238, and Ser279 together coordinate isopentenyl diphosphate.

It belongs to the IspH family. [4Fe-4S] cluster is required as a cofactor.

The catalysed reaction is isopentenyl diphosphate + 2 oxidized [2Fe-2S]-[ferredoxin] + H2O = (2E)-4-hydroxy-3-methylbut-2-enyl diphosphate + 2 reduced [2Fe-2S]-[ferredoxin] + 2 H(+). It catalyses the reaction dimethylallyl diphosphate + 2 oxidized [2Fe-2S]-[ferredoxin] + H2O = (2E)-4-hydroxy-3-methylbut-2-enyl diphosphate + 2 reduced [2Fe-2S]-[ferredoxin] + 2 H(+). It participates in isoprenoid biosynthesis; dimethylallyl diphosphate biosynthesis; dimethylallyl diphosphate from (2E)-4-hydroxy-3-methylbutenyl diphosphate: step 1/1. Its pathway is isoprenoid biosynthesis; isopentenyl diphosphate biosynthesis via DXP pathway; isopentenyl diphosphate from 1-deoxy-D-xylulose 5-phosphate: step 6/6. In terms of biological role, catalyzes the conversion of 1-hydroxy-2-methyl-2-(E)-butenyl 4-diphosphate (HMBPP) into a mixture of isopentenyl diphosphate (IPP) and dimethylallyl diphosphate (DMAPP). Acts in the terminal step of the DOXP/MEP pathway for isoprenoid precursor biosynthesis. This Ehrlichia ruminantium (strain Gardel) protein is 4-hydroxy-3-methylbut-2-enyl diphosphate reductase.